Here is a 270-residue protein sequence, read N- to C-terminus: Orotidine 5'-phosphate decarboxylase (270 aa).

The active-site Proton donor is Lys-89.

This sequence belongs to the OMP decarboxylase family. Type 2 subfamily.

It carries out the reaction orotidine 5'-phosphate + H(+) = UMP + CO2. The protein operates within pyrimidine metabolism; UMP biosynthesis via de novo pathway; UMP from orotate: step 2/2. This chain is Orotidine 5'-phosphate decarboxylase, found in Dehalococcoides mccartyi (strain CBDB1).